Consider the following 504-residue polypeptide: ATP synthase subunit alpha (504 aa).

ATP is bound at residue 171 to 178 (GDRATGKT).

It belongs to the ATPase alpha/beta chains family. F-type ATPases have 2 components, CF(1) - the catalytic core - and CF(0) - the membrane proton channel. CF(1) has five subunits: alpha(3), beta(3), gamma(1), delta(1), epsilon(1). CF(0) has three main subunits: a(1), b(2) and c(9-12). The alpha and beta chains form an alternating ring which encloses part of the gamma chain. CF(1) is attached to CF(0) by a central stalk formed by the gamma and epsilon chains, while a peripheral stalk is formed by the delta and b chains.

Its subcellular location is the cell inner membrane. It carries out the reaction ATP + H2O + 4 H(+)(in) = ADP + phosphate + 5 H(+)(out). In terms of biological role, produces ATP from ADP in the presence of a proton gradient across the membrane. The alpha chain is a regulatory subunit. This Sulfurihydrogenibium sp. (strain YO3AOP1) protein is ATP synthase subunit alpha.